The sequence spans 210 residues: 3-hexulose-6-phosphate synthase 1 (210 aa).

The protein belongs to the HPS/KGPDC family. HPS subfamily.

The catalysed reaction is D-ribulose 5-phosphate + formaldehyde = D-arabino-hex-3-ulose 6-phosphate. It functions in the pathway one-carbon metabolism; formaldehyde assimilation via RuMP pathway; D-fructose 6-phosphate from D-ribulose 5-phosphate and formaldehyde: step 1/2. In terms of biological role, catalyzes the condensation of ribulose 5-phosphate with formaldehyde to form 3-hexulose 6-phosphate. The polypeptide is 3-hexulose-6-phosphate synthase 1 (Staphylococcus saprophyticus subsp. saprophyticus (strain ATCC 15305 / DSM 20229 / NCIMB 8711 / NCTC 7292 / S-41)).